We begin with the raw amino-acid sequence, 402 residues long: Tyrosine--tRNA ligase (402 aa).

Positions 47-56 (PTAPDLHLGH) match the 'HIGH' region motif. Positions 232–236 (KMSKS) match the 'KMSKS' region motif. Lys235 is a binding site for ATP. The S4 RNA-binding domain maps to 341–401 (VGVLDVLKQI…GKKRFMKLNI (61 aa)).

The protein belongs to the class-I aminoacyl-tRNA synthetase family. TyrS type 2 subfamily. In terms of assembly, homodimer.

It is found in the cytoplasm. The catalysed reaction is tRNA(Tyr) + L-tyrosine + ATP = L-tyrosyl-tRNA(Tyr) + AMP + diphosphate + H(+). Catalyzes the attachment of tyrosine to tRNA(Tyr) in a two-step reaction: tyrosine is first activated by ATP to form Tyr-AMP and then transferred to the acceptor end of tRNA(Tyr). This Helicobacter pylori (strain J99 / ATCC 700824) (Campylobacter pylori J99) protein is Tyrosine--tRNA ligase.